Here is a 254-residue protein sequence, read N- to C-terminus: Pyruvate dehydrogenase complex repressor (254 aa).

Residues 9-77 (PKLSDVIEQQ…QGGGTFVQSS (69 aa)) form the HTH gntR-type domain. The H-T-H motif DNA-binding region spans 37–56 (ERELAKQFDVSRPSLREAIQ).

Functionally, transcriptional repressor for the pyruvate dehydrogenase complex genes aceEF and lpd. The protein is Pyruvate dehydrogenase complex repressor (pdhR) of Escherichia coli O6:H1 (strain CFT073 / ATCC 700928 / UPEC).